The primary structure comprises 404 residues: Homocysteine-responsive endoplasmic reticulum-resident ubiquitin-like domain member 2 protein (404 aa).

A Ubiquitin-like domain is found at 10–89 (VTLIIKAPNQ…HMVHLVCASR (80 aa)). The segment at 86–153 (CASRSPPSSP…TLSQAQTDPA (68 aa)) is disordered. Composition is skewed to low complexity over residues 88-97 (SRSPPSSPKS) and 109-126 (SSTS…PSPS). A compositionally biased stretch (polar residues) spans 127–153 (QESLSLVTGSSEGLRQRTLSQAQTDPA). The chain crosses the membrane as a helical span at residues 301–321 (FIMVMGAMLLVYLHQAGWFPF).

It is found in the membrane. Its function is as follows. Could be involved in the unfolded protein response (UPR) pathway. In Mus musculus (Mouse), this protein is Homocysteine-responsive endoplasmic reticulum-resident ubiquitin-like domain member 2 protein (Herpud2).